The chain runs to 591 residues: Aspartate--tRNA(Asp/Asn) ligase (591 aa).

Glu-176 contributes to the L-aspartate binding site. The interval 200–203 (QLFK) is aspartate. Arg-222 lines the L-aspartate pocket. Residues 222–224 (RDE) and Gln-231 contribute to the ATP site. L-aspartate is bound at residue His-450. Residue Glu-484 coordinates ATP. An L-aspartate-binding site is contributed by Arg-491. 536 to 539 (GLDR) is a binding site for ATP.

It belongs to the class-II aminoacyl-tRNA synthetase family. Type 1 subfamily. Homodimer.

It is found in the cytoplasm. It carries out the reaction tRNA(Asx) + L-aspartate + ATP = L-aspartyl-tRNA(Asx) + AMP + diphosphate. Functionally, aspartyl-tRNA synthetase with relaxed tRNA specificity since it is able to aspartylate not only its cognate tRNA(Asp) but also tRNA(Asn). Reaction proceeds in two steps: L-aspartate is first activated by ATP to form Asp-AMP and then transferred to the acceptor end of tRNA(Asp/Asn). The polypeptide is Aspartate--tRNA(Asp/Asn) ligase (Bacillus anthracis (strain CDC 684 / NRRL 3495)).